The following is a 113-amino-acid chain: Nitrogenase vanadium-iron protein delta chain (113 aa).

Hexamer of two alpha, two beta, and two delta chains. It depends on iron-sulfur cluster as a cofactor. Vanadium cation serves as cofactor.

The enzyme catalyses N2 + 8 reduced [2Fe-2S]-[ferredoxin] + 16 ATP + 16 H2O = H2 + 8 oxidized [2Fe-2S]-[ferredoxin] + 2 NH4(+) + 16 ADP + 16 phosphate + 6 H(+). Functionally, the key enzymatic reactions in nitrogen fixation are catalyzed by the nitrogenase complex, which has 2 components: the iron protein (component 2) and a component 1 which is either a molybdenum-iron protein, a vanadium-iron, or an iron-iron protein. This chain is Nitrogenase vanadium-iron protein delta chain (vnfG), found in Azotobacter salinestris.